The sequence spans 531 residues: Protein arginine N-methyltransferase 3 (531 aa).

A disordered region spans residues 1-43 (MCSLASGATGGRGAVENEEDLPELSDSGDEAAWEDEDDADLPH). At Cys-2 the chain carries N-acetylcysteine. The segment covering 16 to 39 (ENEEDLPELSDSGDEAAWEDEDDA) has biased composition (acidic residues). 2 positions are modified to phosphoserine: Ser-25 and Ser-27. The C2H2-type zinc-finger motif lies at 48 to 71 (TPCLFCNRLFTSAEETFSHCKSEH). Positions 48-71 (TPCLFCNRLFTSAEETFSHCKSEH) are interaction with ZNF200. The residue at position 171 (Ser-171) is a Phosphoserine. Residues 186–531 (MKQFAQDFVM…NNSTQTYGLQ (346 aa)) are mediates interaction with ALDH1A1. Residues 217-531 (DGVYFSSYGH…NNSTQTYGLQ (315 aa)) form the SAM-dependent MTase PRMT-type domain. Residues Arg-239, Gly-263, Asp-285, Ile-313, and Glu-314 each coordinate S-adenosyl-L-homocysteine. Residues Glu-329 and Glu-338 contribute to the active site. Ser-343 is a binding site for S-adenosyl-L-homocysteine.

This sequence belongs to the class I-like SAM-binding methyltransferase superfamily. Protein arginine N-methyltransferase family. In terms of assembly, monomer and homodimer. Interacts with EPB41L3 (via FERM domain); the interaction is direct and inhibits the protein-arginine N-methyltransferase activity of PRMT3. Interacts with the 40S ribosomal protein RPS2. Interacts with ALDH1A1; the interaction is direct, inhibits ALDH1A1 aldehyde dehydrogenase activity and is independent of the methyltransferase activity of PRMT3. Interacts (via zinc-finger) with ZNF200 (via C-terminus); the interaction is direct and required to localize PRMT3 to the nucleus and inhibit its proteasomal degradation.

Its subcellular location is the cytoplasm. It is found in the cytosol. The protein localises to the nucleus. The catalysed reaction is L-arginyl-[protein] + S-adenosyl-L-methionine = N(omega)-methyl-L-arginyl-[protein] + S-adenosyl-L-homocysteine + H(+). It carries out the reaction L-arginyl-[protein] + 2 S-adenosyl-L-methionine = N(omega),N(omega)-dimethyl-L-arginyl-[protein] + 2 S-adenosyl-L-homocysteine + 2 H(+). Inhibited by N-ethylmaleimide and high concentrations of zinc chloride. Allosterically inhibited by SGC707. Allosterically inhibited by (1-(benzo[d][1,2,3]thiadiazol- 6-yl)-3-(2-cyclohexenylethyl)urea) and derivatives thereof. Protein-arginine N-methyltransferase that catalyzes both the monomethylation and asymmetric dimethylation of the guanidino nitrogens of arginine residues in target proteins, and therefore falls into the group of type I methyltransferases. Catalyzes the asymmetric arginine dimethylation at multiple sites in the Arg/Gly-rich region of small ribosomal subunit protein uS5/RPS2. Also appears to methylate other ribosomal proteins. May regulate retinoic acid synthesis and signaling by inhibiting ALDH1A1 retinal dehydrogenase activity. Contributes to methylation of histone H4 'Arg-3', a specific tag for epigenetic transcriptional activation. Mediates asymmetric arginine dimethylation of histone H4 'Arg-3' (H4R3me2a) in the promoter region of miRNA miR-3648, to promote its transcription and osteogenesis. This Homo sapiens (Human) protein is Protein arginine N-methyltransferase 3.